We begin with the raw amino-acid sequence, 127 residues long: Fluoride-specific ion channel FluC (127 aa).

The next 4 membrane-spanning stretches (helical) occupy residues 4–24 (TLLAVFIGGGVGSVARWQLGV), 35–55 (LGTLLANLIGAFVIGGALAFF), 71–91 (TGLCGGLTTFSTFSAEVVMFL), and 103–123 (VLLNLAGSLLMTALAFALVTW). The Na(+) site is built by glycine 75 and threonine 78.

The protein belongs to the fluoride channel Fluc/FEX (TC 1.A.43) family.

The protein resides in the cell inner membrane. The catalysed reaction is fluoride(in) = fluoride(out). With respect to regulation, na(+) is not transported, but it plays an essential structural role and its presence is essential for fluoride channel function. Fluoride-specific ion channel. Important for reducing fluoride concentration in the cell, thus reducing its toxicity. This chain is Fluoride-specific ion channel FluC, found in Pectobacterium atrosepticum (strain SCRI 1043 / ATCC BAA-672) (Erwinia carotovora subsp. atroseptica).